We begin with the raw amino-acid sequence, 292 residues long: Small ribosomal subunit biogenesis GTPase RsgA (292 aa).

One can recognise a CP-type G domain in the interval 64-221 (RSELFRPAVA…LVDTPGFSSL (158 aa)). GTP is bound by residues 113-116 (NKMD) and 164-172 (GPSGVGKST). Residues cysteine 245, cysteine 250, histidine 252, and cysteine 258 each contribute to the Zn(2+) site.

It belongs to the TRAFAC class YlqF/YawG GTPase family. RsgA subfamily. In terms of assembly, monomer. Associates with 30S ribosomal subunit, binds 16S rRNA. The cofactor is Zn(2+).

The protein resides in the cytoplasm. In terms of biological role, one of several proteins that assist in the late maturation steps of the functional core of the 30S ribosomal subunit. Helps release RbfA from mature subunits. May play a role in the assembly of ribosomal proteins into the subunit. Circularly permuted GTPase that catalyzes slow GTP hydrolysis, GTPase activity is stimulated by the 30S ribosomal subunit. This is Small ribosomal subunit biogenesis GTPase RsgA from Clostridium botulinum (strain Kyoto / Type A2).